Consider the following 260-residue polypeptide: uncharacterized protein (260 aa).

The N-terminal stretch at 1 to 22 (MKHSKKLLLCISFLLITIFISG) is a signal peptide. Residue cysteine 23 is the site of N-palmitoyl cysteine attachment. The S-diacylglycerol cysteine moiety is linked to residue cysteine 23.

It belongs to the staphylococcal tandem lipoprotein family.

The protein resides in the cell membrane. This is an uncharacterized protein from Staphylococcus epidermidis (strain ATCC 35984 / DSM 28319 / BCRC 17069 / CCUG 31568 / BM 3577 / RP62A).